Consider the following 133-residue polypeptide: ATP synthase epsilon chain, chloroplastic (133 aa).

This sequence belongs to the ATPase epsilon chain family. In terms of assembly, F-type ATPases have 2 components, CF(1) - the catalytic core - and CF(0) - the membrane proton channel. CF(1) has five subunits: alpha(3), beta(3), gamma(1), delta(1), epsilon(1). CF(0) has three main subunits: a, b and c.

It localises to the plastid. The protein localises to the chloroplast thylakoid membrane. Its function is as follows. Produces ATP from ADP in the presence of a proton gradient across the membrane. This chain is ATP synthase epsilon chain, chloroplastic, found in Trieres chinensis (Marine centric diatom).